The chain runs to 668 residues: Lebercilin-like protein (668 aa).

Residues 17–44 are disordered; sequence SVALENNRRSAECKRSPGTGDFSRNSSA. Positions 22 to 31 are enriched in basic and acidic residues; the sequence is NNRRSAECKR. Coiled-coil stretches lie at residues 148–259 and 305–336; these read LHKI…EREE and AAQT…IKNI. Positions 351 to 402 are disordered; it reads YPKVSSTKSVQADRKSLPFTSMRHQGTQKSDVPPLTTKGKKATGNMNHKEKS. Residues 368-380 show a composition bias toward polar residues; that stretch reads PFTSMRHQGTQKS. The stretch at 420–440 forms a coiled coil; that stretch reads EDSKTKYEDLSREEKHLEVQV. 3 disordered regions span residues 495-520, 533-581, and 605-668; these read RSMQ…PLRQ, LHHG…FGKS, and SGYV…KIII. A compositionally biased stretch (polar residues) spans 546-558; that stretch reads AGNTKYSHSTSKH. 2 stretches are compositionally biased toward basic and acidic residues: residues 560-572 and 621-632; these read SNRE…HSDS and GSEEPLQSKESH. Residues 633-660 are compositionally biased toward polar residues; that stretch reads PPSQASASNAFGDSKVTVVNSIKPSSPT.

This sequence belongs to the LCA5 family.

The chain is Lebercilin-like protein from Macaca fascicularis (Crab-eating macaque).